A 466-amino-acid chain; its full sequence is MSHQSDLIEEDIQAYLKQHENKELVRFLTCGSVDDGKSTLIGRLLHDSKMIFEDQLAAIEKDSKKSGTTGEAIDLALLVDGLQSEREQGITIDVAYRYFSTDKRKFIIADTPGHEQYTRNMATGASTCDIAIILIDARYGVQTQTRRHSFICSLLGIKHIVVAVNKMDLVDYSQERYQEIKKEYREFTESLEFSDVRFVPLSALNGDNVVDESVNMPWYPGATLMKLLNTIDVKTQEQFTQLRFQVQYVNRPNLDFRGFAGTLASGHVLVGDTIVALPSGKESVVKEIVTYDGNLERADKGMAVTLTLEDEIDISRGEIIVKKGSLPISAKEFSATVVWMHENELEPGREYFIKHGSKMTTGHAQNIVSKYDVNTMESLSSSQLAINDIGIVNFVAGETLHFDAYEDNQGTGAFIIIDRLSNVTVGAGMINHAIDEKAQEYSAFELELNALVRKQFPHWGARDITK.

Positions 22-237 (KELVRFLTCG…LNTIDVKTQE (216 aa)) constitute a tr-type G domain. A G1 region spans residues 31-38 (GSVDDGKS). 31–38 (GSVDDGKS) is a binding site for GTP. The tract at residues 89 to 93 (GITID) is G2. The G3 stretch occupies residues 110–113 (DTPG). GTP-binding positions include 110-114 (DTPGH) and 165-168 (NKMD). The tract at residues 165-168 (NKMD) is G4. The segment at 202 to 204 (SAL) is G5.

It belongs to the TRAFAC class translation factor GTPase superfamily. Classic translation factor GTPase family. CysN/NodQ subfamily. Heterodimer composed of CysD, the smaller subunit, and CysN.

The catalysed reaction is sulfate + ATP + H(+) = adenosine 5'-phosphosulfate + diphosphate. It participates in sulfur metabolism; hydrogen sulfide biosynthesis; sulfite from sulfate: step 1/3. Functionally, with CysD forms the ATP sulfurylase (ATPS) that catalyzes the adenylation of sulfate producing adenosine 5'-phosphosulfate (APS) and diphosphate, the first enzymatic step in sulfur assimilation pathway. APS synthesis involves the formation of a high-energy phosphoric-sulfuric acid anhydride bond driven by GTP hydrolysis by CysN coupled to ATP hydrolysis by CysD. In Colwellia psychrerythraea (strain 34H / ATCC BAA-681) (Vibrio psychroerythus), this protein is Sulfate adenylyltransferase subunit 1.